We begin with the raw amino-acid sequence, 249 residues long: uncharacterized protein (249 aa).

The first 43 residues, 1–43, serve as a signal peptide directing secretion; it reads MRRGRSRPAGAAPAALLLPLLLLLPLTGCDRLAAAPAEHAAAA. Residues 40–59 are disordered; sequence AAAAGDPAQDADRGRRLPPV. One can recognise a NodB homology domain in the interval 68-243; that stretch reads PVVFLTYDDG…TIEEQGLRVG (176 aa).

This is an uncharacterized protein from Streptomyces coelicolor (strain ATCC BAA-471 / A3(2) / M145).